Consider the following 853-residue polypeptide: MSHANSEETMMNTAVAHPSTSKAKADKDILHTQIAQACEQACQAIAPTWPLDRAIAVNPHWSRIGMPVRKVAARMAVLGGIQVFPPRNLQRQAWDEGRVSAADLAQTLQQLPEAQAAGLSPGDCITALHSEPALEHLPLLIDVLDNDPNRHTRLSWRQAITHQVSQTCAAYFDEHQADWHPERTQGLYAFWRETLQHDHGIGLLMGLPHIGQAIDALPVTAQDAERWVLERLGLPQAVWADYLESVLLTVNGWASWCAYLGWQAKLENGEDAHLGELLAIRLAWGALLLECKDDKANDQAFVTLQRAWEHAPLLLLAAERALLVDEVWQVALEIGYQRELAAKLISAGKTAPGSQAIEVQAAFCIDVRSEPLRRALETAWPGIQTLGFAGFFGLPVAYTPLATQARRPQLPGLLAPAMEVVDSIISAEPEKRNADAALQSASVRSRQYRFAVTDQWKAGSRWPGAAFSFVEAAGLGYLGKIGQWLWPGLQPRSRDDLAGLPARHQSICRPHLIGVGLEAKIDLAARVLQGMGLTRELAPMVLLVGHGSQSANNAHAAGLDCGACCGQTGEVNARSLALLLNEPEVRQGLQAKGIAVPSHTVFVAALHNTTTDEIEGFDLDLMPEDARARWQTLQQVFAQAGNQVRRERSPSLQLDAQASDDALLEQLRRRANDGAQTRPEWGLAGNAAFIIAPRQRSLGIGLEGRSFLHDYDASQDTDGSVLELLMTAPMLVTHWINWQYHASTCDPQRLGSGNKLLHNVVGGNLGVFEGNGGDLRIGLSRQSLHDGKHWIHEPLRLTVVIEAPQAAIEAVIAKHAVVKQLVDNGWLHLWHVESSHLQRYDHGTWSKLELEQA.

Residues 1 to 21 (MSHANSEETMMNTAVAHPSTS) form a disordered region. The segment covering 7-21 (EETMMNTAVAHPSTS) has biased composition (polar residues). Cys-364, Asp-366, His-546, and Cys-561 together coordinate Zn(2+).

The protein belongs to the inorganic carbon transporter (TC 9.A.2) DabA family. Forms a complex with DabB. Requires Zn(2+) as cofactor.

The protein localises to the cell inner membrane. Part of an energy-coupled inorganic carbon pump. The protein is Probable inorganic carbon transporter subunit DabA of Methylovorus glucosotrophus (strain SIP3-4).